Consider the following 81-residue polypeptide: UPF0434 protein msl4429 (81 aa).

It belongs to the UPF0434 family.

This Mesorhizobium japonicum (strain LMG 29417 / CECT 9101 / MAFF 303099) (Mesorhizobium loti (strain MAFF 303099)) protein is UPF0434 protein msl4429.